The following is a 214-amino-acid chain: Thiamine-phosphate synthase (214 aa).

4-amino-2-methyl-5-(diphosphooxymethyl)pyrimidine contacts are provided by residues 37–41 (QYREK) and asparagine 73. Residues aspartate 74 and aspartate 93 each contribute to the Mg(2+) site. Position 112 (serine 112) interacts with 4-amino-2-methyl-5-(diphosphooxymethyl)pyrimidine. Residue 139-141 (TIS) coordinates 2-[(2R,5Z)-2-carboxy-4-methylthiazol-5(2H)-ylidene]ethyl phosphate. Lysine 142 serves as a coordination point for 4-amino-2-methyl-5-(diphosphooxymethyl)pyrimidine. 2-[(2R,5Z)-2-carboxy-4-methylthiazol-5(2H)-ylidene]ethyl phosphate contacts are provided by residues glycine 171 and 191-192 (IS).

Belongs to the thiamine-phosphate synthase family. Mg(2+) is required as a cofactor.

It catalyses the reaction 2-[(2R,5Z)-2-carboxy-4-methylthiazol-5(2H)-ylidene]ethyl phosphate + 4-amino-2-methyl-5-(diphosphooxymethyl)pyrimidine + 2 H(+) = thiamine phosphate + CO2 + diphosphate. The catalysed reaction is 2-(2-carboxy-4-methylthiazol-5-yl)ethyl phosphate + 4-amino-2-methyl-5-(diphosphooxymethyl)pyrimidine + 2 H(+) = thiamine phosphate + CO2 + diphosphate. The enzyme catalyses 4-methyl-5-(2-phosphooxyethyl)-thiazole + 4-amino-2-methyl-5-(diphosphooxymethyl)pyrimidine + H(+) = thiamine phosphate + diphosphate. It participates in cofactor biosynthesis; thiamine diphosphate biosynthesis; thiamine phosphate from 4-amino-2-methyl-5-diphosphomethylpyrimidine and 4-methyl-5-(2-phosphoethyl)-thiazole: step 1/1. Condenses 4-methyl-5-(beta-hydroxyethyl)thiazole monophosphate (THZ-P) and 2-methyl-4-amino-5-hydroxymethyl pyrimidine pyrophosphate (HMP-PP) to form thiamine monophosphate (TMP). The polypeptide is Thiamine-phosphate synthase (Listeria innocua serovar 6a (strain ATCC BAA-680 / CLIP 11262)).